Here is a 258-residue protein sequence, read N- to C-terminus: DNA repair protein RecO (258 aa).

This sequence belongs to the RecO family.

In terms of biological role, involved in DNA repair and RecF pathway recombination. The chain is DNA repair protein RecO from Syntrophotalea carbinolica (strain DSM 2380 / NBRC 103641 / GraBd1) (Pelobacter carbinolicus).